A 1254-amino-acid polypeptide reads, in one-letter code: DNA-directed RNA polymerase subunit beta' (1254 aa).

4 residues coordinate Zn(2+): Cys59, Cys61, Cys76, and Cys79. Residues Asp501, Asp503, and Asp505 each coordinate Mg(2+). Residues Cys871, Cys946, Cys953, and Cys956 each contribute to the Zn(2+) site.

The protein belongs to the RNA polymerase beta' chain family. In terms of assembly, the RNAP catalytic core consists of 2 alpha, 1 beta, 1 beta' and 1 omega subunit. When a sigma factor is associated with the core the holoenzyme is formed, which can initiate transcription. Mg(2+) is required as a cofactor. Requires Zn(2+) as cofactor.

The enzyme catalyses RNA(n) + a ribonucleoside 5'-triphosphate = RNA(n+1) + diphosphate. Its function is as follows. DNA-dependent RNA polymerase catalyzes the transcription of DNA into RNA using the four ribonucleoside triphosphates as substrates. The chain is DNA-directed RNA polymerase subunit beta' from Mesoplasma florum (strain ATCC 33453 / NBRC 100688 / NCTC 11704 / L1) (Acholeplasma florum).